Consider the following 163-residue polypeptide: Crossover junction endodeoxyribonuclease RuvC (163 aa).

Residues Asp-9, Glu-76, and Asp-148 contribute to the active site. Residues Asp-9, Glu-76, and Asp-148 each contribute to the Mg(2+) site.

Belongs to the RuvC family. As to quaternary structure, homodimer which binds Holliday junction (HJ) DNA. The HJ becomes 2-fold symmetrical on binding to RuvC with unstacked arms; it has a different conformation from HJ DNA in complex with RuvA. In the full resolvosome a probable DNA-RuvA(4)-RuvB(12)-RuvC(2) complex forms which resolves the HJ. It depends on Mg(2+) as a cofactor.

It is found in the cytoplasm. The enzyme catalyses Endonucleolytic cleavage at a junction such as a reciprocal single-stranded crossover between two homologous DNA duplexes (Holliday junction).. Its function is as follows. The RuvA-RuvB-RuvC complex processes Holliday junction (HJ) DNA during genetic recombination and DNA repair. Endonuclease that resolves HJ intermediates. Cleaves cruciform DNA by making single-stranded nicks across the HJ at symmetrical positions within the homologous arms, yielding a 5'-phosphate and a 3'-hydroxyl group; requires a central core of homology in the junction. The consensus cleavage sequence is 5'-(A/T)TT(C/G)-3'. Cleavage occurs on the 3'-side of the TT dinucleotide at the point of strand exchange. HJ branch migration catalyzed by RuvA-RuvB allows RuvC to scan DNA until it finds its consensus sequence, where it cleaves and resolves the cruciform DNA. This chain is Crossover junction endodeoxyribonuclease RuvC, found in Nostoc sp. (strain PCC 7120 / SAG 25.82 / UTEX 2576).